A 464-amino-acid chain; its full sequence is Soluble pyridine nucleotide transhydrogenase (464 aa).

Position 35 to 44 (35 to 44 (DSRRVVGGNC)) interacts with FAD.

Belongs to the class-I pyridine nucleotide-disulfide oxidoreductase family. The cofactor is FAD.

It is found in the cytoplasm. The catalysed reaction is NAD(+) + NADPH = NADH + NADP(+). Its function is as follows. Conversion of NADPH, generated by peripheral catabolic pathways, to NADH, which can enter the respiratory chain for energy generation. In Pseudomonas paraeruginosa (strain DSM 24068 / PA7) (Pseudomonas aeruginosa (strain PA7)), this protein is Soluble pyridine nucleotide transhydrogenase.